Here is a 275-residue protein sequence, read N- to C-terminus: NH(3)-dependent NAD(+) synthetase (275 aa).

39–46 (GLSGGVDS) lines the ATP pocket. D45 contacts Mg(2+). R124 is a binding site for deamido-NAD(+). Position 144 (T144) interacts with ATP. Position 149 (E149) interacts with Mg(2+). K157 and D164 together coordinate deamido-NAD(+). Positions 173 and 195 each coordinate ATP. Position 255 to 256 (255 to 256 (HK)) interacts with deamido-NAD(+).

This sequence belongs to the NAD synthetase family. In terms of assembly, homodimer.

The catalysed reaction is deamido-NAD(+) + NH4(+) + ATP = AMP + diphosphate + NAD(+) + H(+). The protein operates within cofactor biosynthesis; NAD(+) biosynthesis; NAD(+) from deamido-NAD(+) (ammonia route): step 1/1. Catalyzes the ATP-dependent amidation of deamido-NAD to form NAD. Uses ammonia as a nitrogen source. In Staphylothermus marinus (strain ATCC 43588 / DSM 3639 / JCM 9404 / F1), this protein is NH(3)-dependent NAD(+) synthetase.